The sequence spans 341 residues: DNA-directed RNA polymerase subunit alpha (341 aa).

The alpha N-terminal domain (alpha-NTD) stretch occupies residues 1–233 (MIRDEIPISA…NLFIPFLHAE (233 aa)). Residues 265–341 (TKGVTFKHIF…NLPKNKLHFH (77 aa)) are alpha C-terminal domain (alpha-CTD).

It belongs to the RNA polymerase alpha chain family. In plastids the minimal PEP RNA polymerase catalytic core is composed of four subunits: alpha, beta, beta', and beta''. When a (nuclear-encoded) sigma factor is associated with the core the holoenzyme is formed, which can initiate transcription.

The protein resides in the plastid. It is found in the chloroplast. It carries out the reaction RNA(n) + a ribonucleoside 5'-triphosphate = RNA(n+1) + diphosphate. Its function is as follows. DNA-dependent RNA polymerase catalyzes the transcription of DNA into RNA using the four ribonucleoside triphosphates as substrates. The chain is DNA-directed RNA polymerase subunit alpha from Takakia lepidozioides (Moss).